Reading from the N-terminus, the 326-residue chain is Acetyl-coenzyme A carboxylase carboxyl transferase subunit beta (326 aa).

A CoA carboxyltransferase N-terminal domain is found at 29 to 298 (LWIKCEACGT…TLISDESLET (270 aa)). Cys33, Cys36, Cys52, and Cys55 together coordinate Zn(2+). The C4-type zinc finger occupies 33 to 55 (CEACGTLTYTKDLQANQMVCPEC). Positions 302-326 (CHLPFQAESHNLSTTDNKIQPTPQG) are disordered. A compositionally biased stretch (polar residues) spans 309 to 326 (ESHNLSTTDNKIQPTPQG).

Belongs to the AccD/PCCB family. Acetyl-CoA carboxylase is a heterohexamer composed of biotin carboxyl carrier protein (AccB), biotin carboxylase (AccC) and two subunits each of ACCase subunit alpha (AccA) and ACCase subunit beta (AccD). It depends on Zn(2+) as a cofactor.

It is found in the cytoplasm. It catalyses the reaction N(6)-carboxybiotinyl-L-lysyl-[protein] + acetyl-CoA = N(6)-biotinyl-L-lysyl-[protein] + malonyl-CoA. It participates in lipid metabolism; malonyl-CoA biosynthesis; malonyl-CoA from acetyl-CoA: step 1/1. Component of the acetyl coenzyme A carboxylase (ACC) complex. Biotin carboxylase (BC) catalyzes the carboxylation of biotin on its carrier protein (BCCP) and then the CO(2) group is transferred by the transcarboxylase to acetyl-CoA to form malonyl-CoA. This is Acetyl-coenzyme A carboxylase carboxyl transferase subunit beta from Trichodesmium erythraeum (strain IMS101).